The following is an 873-amino-acid chain: Actin-related protein 8 (873 aa).

The interval 108 to 129 (DEQVKPTSSTSSTSTTEEVEIK) is disordered. Positions 114-123 (TSSTSSTSTT) are enriched in low complexity. 368 to 371 (DLGH) lines the ATP pocket. The segment covering 596 to 650 (NNNNNNNNSSSSSNNNNNNNNSGSNSNINSYNNNNNNNNNNNNNNNNNNNNSFNN) has biased composition (low complexity). Residues 596-701 (NNNNNNNNSS…TSSPTKKLKI (106 aa)) are disordered. Polar residues predominate over residues 651–668 (VTIVTSTLNSNSTVPSTL). The span at 669 to 696 (NSNSTVPSISNSNSTVPSTSTSTTSSPT) shows a compositional bias: low complexity. Residues 762-804 (FKQLEQQYQAQQLQFQQQLQQQQQQQQQLQQQLQNSTNSATTT) adopt a coiled-coil conformation.

It belongs to the actin family. ARP8 subfamily. Component of the chromatin remodeling INO80 complex. Exists as monomers and dimers, but the dimer is most probably the biologically relevant form required for stable interactions with histones that exploits the twofold symmetry of the nucleosome core.

Its subcellular location is the nucleus. It localises to the cytoplasm. It is found in the cytoskeleton. Its function is as follows. Plays an important role in the functional organization of mitotic chromosomes. Exhibits low basal ATPase activity, and unable to polymerize. In terms of biological role, proposed core component of the chromatin remodeling INO80 complex which is involved in transcriptional regulation, DNA replication and probably DNA repair. Strongly prefer nucleosomes and H3-H4 tetramers over H2A-H2B dimers, suggesting it may act as a nucleosome recognition module within the complex. The protein is Actin-related protein 8 of Dictyostelium discoideum (Social amoeba).